Consider the following 293-residue polypeptide: Acidic endochitinase (293 aa).

An N-terminal signal peptide occupies residues 1 to 22 (MEKCFNIIPSLLLISLLIKSSN). Positions 24-293 (AGIAVYWGQN…GYSNAIKGSV (270 aa)) constitute a GH18 domain. 2 cysteine pairs are disulfide-bonded: C43–C90 and C73–C80. E150 functions as the Proton donor in the catalytic mechanism. C179 and C208 are disulfide-bonded.

Belongs to the glycosyl hydrolase 18 family. Chitinase class II subfamily.

The protein resides in the secreted. It localises to the extracellular space. It carries out the reaction Random endo-hydrolysis of N-acetyl-beta-D-glucosaminide (1-&gt;4)-beta-linkages in chitin and chitodextrins.. This protein functions as a defense against chitin containing fungal pathogens. The sequence is that of Acidic endochitinase from Cicer arietinum (Chickpea).